The sequence spans 595 residues: Sorting nexin-9 (595 aa).

The SH3 domain maps to 1-62; sequence MATKARVMYD…PTDYVEILPN (62 aa). A compositionally biased stretch (low complexity) spans 89 to 100; it reads QTNSSSANSNNQ. A disordered region spans residues 89 to 199; sequence QTNSSSANSN…QRGNSRAGAS (111 aa). Position 121 is a phosphoserine (Ser121). The segment covering 129–144 has biased composition (polar residues); that stretch reads TDGTSAQRNSSANNWD. Over residues 159–169 the composition is skewed to acidic residues; the sequence is GDDDEWDEDWD. Ser200 is modified (phosphoserine). The segment at 201-213 is critical for tubulation activity; it reads MKLPLNKFPGFAK. The residue at position 239 (Tyr239) is a Phosphotyrosine. One can recognise a PX domain in the interval 250 to 360; it reads FDCVVADPRK…QQFLNFRDEK (111 aa). A 1,2-diacyl-sn-glycero-3-phospho-(1D-myo-inositol-4,5-bisphosphate) is bound by residues Arg286, Lys288, and Arg327. Lys288 carries the N6-acetyllysine modification. Residues 392–595 enclose the BAR domain; it reads LIEIEQKCDA…RQALSRFPVM (204 aa).

Belongs to the sorting nexin family. Homodimer, and homooligomer. Heterodimer with SNX18. Interacts with ITCH. Interacts (via SH3 domain) with TNK2, WASL and ACTR3. Identified in a complex with TNK2 and clathrin heavy chains. Identified in a complex with the AP-2 complex, clathrin and DNM2. Interacts (via SH3 domain) with DNM1 and DNM2. Identified in an oligomeric complex containing DNM1 and SNX9. Interacts with FCHSD1. Interacts with ADAM9 and ADAM15 cytoplasmic tails. Phosphorylated on tyrosine residues by TNK2. Phosphorylation promotes its activity in the degradation of EGFR. Post-translationally, ubiquitinated by ITCH. In terms of tissue distribution, detected in inner ear vestibula and in the cuticular plate of cochlear hair cells (at protein level).

It localises to the cytoplasmic vesicle membrane. Its subcellular location is the cell membrane. The protein localises to the cytoplasmic vesicle. It is found in the clathrin-coated vesicle. The protein resides in the golgi apparatus. It localises to the trans-Golgi network. Its subcellular location is the cell projection. The protein localises to the ruffle. It is found in the cytoplasm. Involved in endocytosis and intracellular vesicle trafficking, both during interphase and at the end of mitosis. Required for efficient progress through mitosis and cytokinesis. Required for normal formation of the cleavage furrow at the end of mitosis. Plays a role in endocytosis via clathrin-coated pits, but also clathrin-independent, actin-dependent fluid-phase endocytosis. Plays a role in macropinocytosis. Promotes internalization of TNFR. Promotes degradation of EGFR after EGF signaling. Stimulates the GTPase activity of DNM1. Promotes DNM1 oligomerization. Promotes activation of the Arp2/3 complex by WASL, and thereby plays a role in the reorganization of the F-actin cytoskeleton. Binds to membranes enriched in phosphatidylinositol 4,5-bisphosphate and promotes membrane tubulation. Has lower affinity for membranes enriched in phosphatidylinositol 3-phosphate. This is Sorting nexin-9 (Snx9) from Mus musculus (Mouse).